The following is a 156-amino-acid chain: ATP synthase subunit b (156 aa).

Residues 11–31 traverse the membrane as a helical segment; the sequence is AIAFILFVWFCMKYVWPPLMA.

It belongs to the ATPase B chain family. In terms of assembly, F-type ATPases have 2 components, F(1) - the catalytic core - and F(0) - the membrane proton channel. F(1) has five subunits: alpha(3), beta(3), gamma(1), delta(1), epsilon(1). F(0) has three main subunits: a(1), b(2) and c(10-14). The alpha and beta chains form an alternating ring which encloses part of the gamma chain. F(1) is attached to F(0) by a central stalk formed by the gamma and epsilon chains, while a peripheral stalk is formed by the delta and b chains.

It localises to the cell inner membrane. Functionally, f(1)F(0) ATP synthase produces ATP from ADP in the presence of a proton or sodium gradient. F-type ATPases consist of two structural domains, F(1) containing the extramembraneous catalytic core and F(0) containing the membrane proton channel, linked together by a central stalk and a peripheral stalk. During catalysis, ATP synthesis in the catalytic domain of F(1) is coupled via a rotary mechanism of the central stalk subunits to proton translocation. In terms of biological role, component of the F(0) channel, it forms part of the peripheral stalk, linking F(1) to F(0). The sequence is that of ATP synthase subunit b from Salmonella agona (strain SL483).